We begin with the raw amino-acid sequence, 339 residues long: Uroporphyrinogen decarboxylase (339 aa).

Residues 21-25 (RQAGR), Asp71, Tyr146, Ser201, and His316 contribute to the substrate site.

The protein belongs to the uroporphyrinogen decarboxylase family. As to quaternary structure, homodimer.

It localises to the cytoplasm. It catalyses the reaction uroporphyrinogen III + 4 H(+) = coproporphyrinogen III + 4 CO2. It participates in porphyrin-containing compound metabolism; protoporphyrin-IX biosynthesis; coproporphyrinogen-III from 5-aminolevulinate: step 4/4. Functionally, catalyzes the decarboxylation of four acetate groups of uroporphyrinogen-III to yield coproporphyrinogen-III. The protein is Uroporphyrinogen decarboxylase of Rickettsia canadensis (strain McKiel).